The chain runs to 180 residues: MKKERLEQASAFGKDRVKKKKNTDTSSNLIPVPKGATKEKKRVGRGPGSKVGKTAGRGSKGQYARNTVRRGFEGGQMPIHRRLPKRGFTSKFHKEFYPVNLRDIEKSGLTGNIDAKIMVQSKILDKETTLFKILGTGEIKKAIHVIADGFSQSAKEKIEKAGGSIKLRAELKLATSETKK.

The disordered stretch occupies residues 1–62; that stretch reads MKKERLEQAS…KTAGRGSKGQ (62 aa).

It belongs to the universal ribosomal protein uL15 family. In terms of assembly, part of the 50S ribosomal subunit.

Binds to the 23S rRNA. The chain is Large ribosomal subunit protein uL15 from Leptospira interrogans serogroup Icterohaemorrhagiae serovar copenhageni (strain Fiocruz L1-130).